A 333-amino-acid polypeptide reads, in one-letter code: Adenosine deaminase (333 aa).

Residues H12 and H14 each contribute to the Zn(2+) site. Substrate contacts are provided by H14, D16, and G170. Zn(2+) is bound at residue H197. The active-site Proton donor is E200. Residue D278 participates in Zn(2+) binding. D279 contributes to the substrate binding site.

The protein belongs to the metallo-dependent hydrolases superfamily. Adenosine and AMP deaminases family. Adenosine deaminase subfamily. Zn(2+) serves as cofactor.

The enzyme catalyses adenosine + H2O + H(+) = inosine + NH4(+). The catalysed reaction is 2'-deoxyadenosine + H2O + H(+) = 2'-deoxyinosine + NH4(+). Catalyzes the hydrolytic deamination of adenosine and 2-deoxyadenosine. The chain is Adenosine deaminase from Escherichia coli O139:H28 (strain E24377A / ETEC).